The sequence spans 550 residues: Protein UshA (550 aa).

An N-terminal signal peptide occupies residues 1–25; that stretch reads MKLLQRGVALALLTTFTLASETALA. Residues Asp-41, His-43, Asp-84, Asn-116, His-217, His-252, and Gln-254 each coordinate Zn(2+). The cysteines at positions 258 and 275 are disulfide-linked. Substrate-binding positions include 375 to 379 and 498 to 504; these read RDKVR and FNATGGD.

The protein belongs to the 5'-nucleotidase family. As to quaternary structure, monomer. Zn(2+) is required as a cofactor.

It is found in the periplasm. It catalyses the reaction UDP-sugar + H2O = UMP + alpha-D-aldose 1-phosphate.. The catalysed reaction is a ribonucleoside 5'-phosphate + H2O = a ribonucleoside + phosphate. With respect to regulation, the activity of this protein is inhibited by an intracellular protein inhibitor. In terms of biological role, degradation of external UDP-glucose to uridine monophosphate and glucose-1-phosphate, which can then be used by the cell. The polypeptide is Protein UshA (ushA) (Escherichia coli (strain K12)).